We begin with the raw amino-acid sequence, 350 residues long: Dihydroorotate dehydrogenase (quinone) (350 aa).

FMN is bound by residues 67–71 and Gly91; that span reads AGFDK. Lys71 contacts substrate. A substrate-binding site is contributed by 116 to 120; it reads NRMGF. 2 residues coordinate FMN: Asn144 and Asn177. Residue Asn177 coordinates substrate. Ser180 serves as the catalytic Nucleophile. Asn182 lines the substrate pocket. The FMN site is built by Lys213 and Thr241. Residue 242–243 coordinates substrate; that stretch reads NT. The segment at 249-268 is disordered; sequence ASLHSDAADEEGGLSGAPIT. FMN is bound by residues Gly264, Gly291, and 312-313; that span reads YT.

It belongs to the dihydroorotate dehydrogenase family. Type 2 subfamily. In terms of assembly, monomer. The cofactor is FMN.

The protein localises to the cell membrane. It carries out the reaction (S)-dihydroorotate + a quinone = orotate + a quinol. It participates in pyrimidine metabolism; UMP biosynthesis via de novo pathway; orotate from (S)-dihydroorotate (quinone route): step 1/1. In terms of biological role, catalyzes the conversion of dihydroorotate to orotate with quinone as electron acceptor. The protein is Dihydroorotate dehydrogenase (quinone) of Natronomonas pharaonis (strain ATCC 35678 / DSM 2160 / CIP 103997 / JCM 8858 / NBRC 14720 / NCIMB 2260 / Gabara) (Halobacterium pharaonis).